The primary structure comprises 103 residues: Large ribosomal subunit protein bL21 (103 aa).

The protein belongs to the bacterial ribosomal protein bL21 family. As to quaternary structure, part of the 50S ribosomal subunit. Contacts protein L20.

In terms of biological role, this protein binds to 23S rRNA in the presence of protein L20. The chain is Large ribosomal subunit protein bL21 from Legionella pneumophila (strain Lens).